The primary structure comprises 575 residues: Aspartate--tRNA ligase (575 aa).

Glutamate 169 contacts L-aspartate. The interval glutamine 193–lysine 196 is aspartate. Arginine 215 is a binding site for L-aspartate. ATP contacts are provided by residues arginine 215 to glutamate 217 and glutamine 224. Histidine 438 serves as a coordination point for L-aspartate. Glutamate 472 contributes to the ATP binding site. Arginine 479 contacts L-aspartate. ATP is bound at residue glycine 524 to arginine 527.

It belongs to the class-II aminoacyl-tRNA synthetase family. Type 1 subfamily. In terms of assembly, homodimer.

The protein resides in the cytoplasm. The enzyme catalyses tRNA(Asp) + L-aspartate + ATP = L-aspartyl-tRNA(Asp) + AMP + diphosphate. In terms of biological role, catalyzes the attachment of L-aspartate to tRNA(Asp) in a two-step reaction: L-aspartate is first activated by ATP to form Asp-AMP and then transferred to the acceptor end of tRNA(Asp). The polypeptide is Aspartate--tRNA ligase (Mycoplasma capricolum subsp. capricolum (strain California kid / ATCC 27343 / NCTC 10154)).